The primary structure comprises 589 residues: Protein kinase G11A (589 aa).

The disordered stretch occupies residues 1–167 (MASKAMPRAP…SACSSISSVT (167 aa)). 2 stretches are compositionally biased toward polar residues: residues 15 to 36 (NLQS…SPSK) and 63 to 76 (TQHQ…TGSN). The span at 91-100 (RLADEEKGVV) shows a compositional bias: basic and acidic residues. The segment covering 142 to 165 (SSSRCRPSTSSDVSDESACSSISS) has biased composition (low complexity). The Protein kinase domain occupies 195–533 (FKLLKKLGCG…ATEIKQHPFF (339 aa)). Residues 201 to 209 (LGCGDIGSV) and Lys-224 contribute to the ATP site. The active-site Proton acceptor is Asp-320. The tract at residues 551-589 (RPVEIERPPKQPVSTSEPAAAPSDAAQKSSDSYLEFDFF) is disordered.

It belongs to the protein kinase superfamily. Ser/Thr protein kinase family.

It carries out the reaction L-seryl-[protein] + ATP = O-phospho-L-seryl-[protein] + ADP + H(+). The enzyme catalyses L-threonyl-[protein] + ATP = O-phospho-L-threonyl-[protein] + ADP + H(+). Functionally, may play a role in the regulation of metabolism and signal transduction processes. The chain is Protein kinase G11A from Oryza sativa subsp. japonica (Rice).